A 390-amino-acid chain; its full sequence is Putative nickel insertion protein (390 aa).

It belongs to the LarC family.

The protein is Putative nickel insertion protein of Myxococcus xanthus (strain DK1622).